Here is a 508-residue protein sequence, read N- to C-terminus: Protection of telomeres protein tpz1 (508 aa).

Residues 2-223 (SNCLKHPWLE…ENTTHGIYLE (222 aa)) are pot1-binding. Disordered regions lie at residues 159 to 178 (QEAS…NSRD), 235 to 269 (VSET…PSLP), and 282 to 358 (PPPF…QSHR). Polar residues predominate over residues 327–347 (STEQLNSSLTIERSQSIQSTD). The segment covering 348-358 (SKQRVETQSHR) has biased composition (basic and acidic residues). Positions 379-508 (TIDDSTGKLL…KKIEEFRNKS (130 aa)) are ccq1/poz1-binding.

As to quaternary structure, interacts with ccq1, pot1 and poz1.

The protein resides in the chromosome. Its subcellular location is the telomere. It localises to the nucleus. Telomeric DNA-binding protein that is required to protect the 3'-end telomeric overhang and involved in telomere length regulation. recruits poz1 and ccq1 to telomeres, regulating telomere length negatively and positively respectively. This Schizosaccharomyces pombe (strain 972 / ATCC 24843) (Fission yeast) protein is Protection of telomeres protein tpz1 (tpz1).